The primary structure comprises 300 residues: uncharacterized protein (300 aa).

Disordered regions lie at residues 167–186 (DVFLNSSPPPHTAQVSHHEH) and 224–244 (ADGSSLETSSMSSPRPEDASH). Over residues 224–236 (ADGSSLETSSMSS) the composition is skewed to polar residues.

This is an uncharacterized protein from Rattus norvegicus (Rat).